A 395-amino-acid polypeptide reads, in one-letter code: MNNVISSKDNHNHTLVFTGKGGKYFVICLVNFLLTCITLGIYAPWAMVKCRRYIYTNMTLNNQPFAYKATGGALFISVLLVFIIYIVSLSLIEHGHPGLGFTLFGLLIAIIPFMAVKGLQYQAMMTSLNGVHFGFQCSMRRAWWYMFALPVLLMVALYIVLYIISLVTIAVGGLVFSIVFLGLLAIIGIGVINGITYSKWMTLFGNGANFGIHRFSIQVNVKTCIRGCVLAMLTLFPFAVVIGYLIAPVFTDMILLSMMGNAQAGGALILQYYGQIMACYFLYFLAIIVVTSYLYVALRNLFLNNLSLANDSIRFHSSVTAHGMLWRLLVVFVISGVTLGLAYPWLKIWLVSWLAQNTQVQGDLDSLELTNDEKPLENSPLMWISRGIMPYFPFI.

The Cytoplasmic portion of the chain corresponds to 1–24 (MNNVISSKDNHNHTLVFTGKGGKY). The chain crosses the membrane as a helical span at residues 25–45 (FVICLVNFLLTCITLGIYAPW). The Periplasmic segment spans residues 46–71 (AMVKCRRYIYTNMTLNNQPFAYKATG). A helical transmembrane segment spans residues 72–92 (GALFISVLLVFIIYIVSLSLI). Topologically, residues 93–95 (EHG) are cytoplasmic. A helical transmembrane segment spans residues 96–116 (HPGLGFTLFGLLIAIIPFMAV). The Periplasmic portion of the chain corresponds to 117-146 (KGLQYQAMMTSLNGVHFGFQCSMRRAWWYM). Residues 147-167 (FALPVLLMVALYIVLYIISLV) traverse the membrane as a helical segment. A topological domain (cytoplasmic) is located at residue threonine 168. The chain crosses the membrane as a helical span at residues 169-189 (IAVGGLVFSIVFLGLLAIIGI). Topologically, residues 190 to 229 (GVINGITYSKWMTLFGNGANFGIHRFSIQVNVKTCIRGCV) are periplasmic. Residues 230–250 (LAMLTLFPFAVVIGYLIAPVF) traverse the membrane as a helical segment. The Cytoplasmic portion of the chain corresponds to 251-275 (TDMILLSMMGNAQAGGALILQYYGQ). A helical transmembrane segment spans residues 276 to 296 (IMACYFLYFLAIIVVTSYLYV). The Periplasmic segment spans residues 297–327 (ALRNLFLNNLSLANDSIRFHSSVTAHGMLWR). The helical transmembrane segment at 328-348 (LLVVFVISGVTLGLAYPWLKI) threads the bilayer. Over 349 to 395 (WLVSWLAQNTQVQGDLDSLELTNDEKPLENSPLMWISRGIMPYFPFI) the chain is Cytoplasmic.

It localises to the cell inner membrane. The sequence is that of Inner membrane protein YjgN (yjgN) from Salmonella typhimurium (strain LT2 / SGSC1412 / ATCC 700720).